We begin with the raw amino-acid sequence, 449 residues long: Phosphoglucosamine mutase (449 aa).

S104 serves as the catalytic Phosphoserine intermediate. Positions 104, 243, 245, and 247 each coordinate Mg(2+). At S104 the chain carries Phosphoserine.

Belongs to the phosphohexose mutase family. Requires Mg(2+) as cofactor. Activated by phosphorylation.

It carries out the reaction alpha-D-glucosamine 1-phosphate = D-glucosamine 6-phosphate. In terms of biological role, catalyzes the conversion of glucosamine-6-phosphate to glucosamine-1-phosphate. This chain is Phosphoglucosamine mutase, found in Xanthomonas campestris pv. campestris (strain 8004).